Consider the following 498-residue polypeptide: GTPase Der (498 aa).

EngA-type G domains are found at residues 3-166 and 212-385; these read PVVA…FEEL and IKFA…RSAT. GTP contacts are provided by residues 9–16, 56–60, 118–121, 218–225, 265–269, and 330–333; these read GRPNVGKS, DTGGI, NKTD, DTAGV, and NKWD. A KH-like domain is found at 386–470; sequence KRISTSMLTR…PIHIEFQEGD (85 aa).

This sequence belongs to the TRAFAC class TrmE-Era-EngA-EngB-Septin-like GTPase superfamily. EngA (Der) GTPase family. As to quaternary structure, associates with the 50S ribosomal subunit.

Functionally, GTPase that plays an essential role in the late steps of ribosome biogenesis. The chain is GTPase Der from Tolumonas auensis (strain DSM 9187 / NBRC 110442 / TA 4).